The sequence spans 261 residues: Fructoselysine 6-kinase (261 aa).

It belongs to the carbohydrate kinase PfkB family. Monomer.

The enzyme catalyses N(6)-(D-fructosyl)-L-lysine + ATP = N(6)-(6-phospho-D-fructosyl)-L-lysine + ADP + H(+). It functions in the pathway carbohydrate metabolism; fructoselysine degradation; D-glucose 6-phosphate and lysine from fructoselysine: step 1/2. In terms of biological role, catalyzes the ATP-dependent phosphorylation of fructoselysine to fructoselysine 6-phosphate. May function in a fructoselysine degradation pathway that allows S.flexneri to grow on fructoselysine or psicoselysine. This is Fructoselysine 6-kinase (frlD) from Shigella flexneri.